The chain runs to 493 residues: Mitochondrial distribution and morphology protein 10 (493 aa).

It belongs to the MDM10 family. Component of the ER-mitochondria encounter structure (ERMES) or MDM complex, composed of MMM1, MDM10, MDM12 and MDM34. Associates with the mitochondrial outer membrane sorting assembly machinery SAM(core) complex, which consists of SAM35, SAM37 and SAM50, to form a SAM(holo) complex.

Its subcellular location is the mitochondrion outer membrane. Its function is as follows. Component of the ERMES/MDM complex, which serves as a molecular tether to connect the endoplasmic reticulum and mitochondria. Components of this complex are involved in the control of mitochondrial shape and protein biogenesis and may function in phospholipid exchange. MDM10 is involved in the late assembly steps of the general translocase of the mitochondrial outer membrane (TOM complex). Functions in the TOM40-specific route of the assembly of outer membrane beta-barrel proteins, including the association of TOM40 with the receptor TOM22 and small TOM proteins. Can associate with the SAM(core) complex as well as the MDM12-MMM1 complex, both involved in late steps of the major beta-barrel assembly pathway, that is responsible for biogenesis of all outer membrane beta-barrel proteins. May act as a switch that shuttles between both complexes and channels precursor proteins into the TOM40-specific pathway. Plays a role in mitochondrial morphology and in the inheritance of mitochondria. The protein is Mitochondrial distribution and morphology protein 10 of Saccharomyces cerevisiae (strain RM11-1a) (Baker's yeast).